Reading from the N-terminus, the 802-residue chain is Copper-exporting P-type ATPase (802 aa).

HMA domains lie at Lys5 to Ala70 and Glu72 to Ser138. The Cu(+) site is built by Cys16, Cys19, Cys83, and Cys86. The next 6 helical transmembrane spans lie at Leu161–Asn181, Trp192–Gly212, Met224–Val244, Leu256–Ala276, Tyr411–Val431, and Pro438–Ala458. The active-site 4-aspartylphosphate intermediate is the Asp495. Positions 690 and 694 each coordinate Mg(2+). 2 helical membrane-spanning segments follow: residues Leu748–Leu767 and Val771–Leu790.

Belongs to the cation transport ATPase (P-type) (TC 3.A.3) family. Type IB subfamily.

The protein resides in the cell membrane. The enzyme catalyses Cu(+)(in) + ATP + H2O = Cu(+)(out) + ADP + phosphate + H(+). Involved in copper export. The polypeptide is Copper-exporting P-type ATPase (copA) (Staphylococcus aureus (strain MRSA252)).